The following is a 426-amino-acid chain: Dihydroorotase (426 aa).

Positions 59 and 61 each coordinate Zn(2+). Substrate contacts are provided by residues 61-63 (HLR) and N93. Zn(2+) contacts are provided by D151, H178, and H232. Residue N279 participates in substrate binding. Zn(2+) is bound at residue D306. Residue D306 is part of the active site. Substrate contacts are provided by residues H310 and 324 to 325 (FG).

The protein belongs to the metallo-dependent hydrolases superfamily. DHOase family. Class I DHOase subfamily. The cofactor is Zn(2+).

The enzyme catalyses (S)-dihydroorotate + H2O = N-carbamoyl-L-aspartate + H(+). Its pathway is pyrimidine metabolism; UMP biosynthesis via de novo pathway; (S)-dihydroorotate from bicarbonate: step 3/3. Its function is as follows. Catalyzes the reversible cyclization of carbamoyl aspartate to dihydroorotate. This is Dihydroorotase from Brevibacillus brevis (strain 47 / JCM 6285 / NBRC 100599).